The primary structure comprises 192 residues: MVLVVGLGNPGKTYESTRHNIGFRVIDALLERRSALNATKSTFKGELHKEGENLFLKPTTYMNLSGESALPVSTFYKPEKILVIHDDLDLPFGAIRLKRGGGNGGHNGLKSLDKLLGNDYYRLRIGIGKPPLGWEVADYVLARFSQEEEQELEERLFPHAKEAIESFLEGKMEWDRLVSRYSLKPSTPKEKV.

Tyrosine 14 contacts tRNA. Histidine 19 (proton acceptor) is an active-site residue. Tyrosine 61, asparagine 63, and asparagine 107 together coordinate tRNA.

It belongs to the PTH family. Monomer.

Its subcellular location is the cytoplasm. The enzyme catalyses an N-acyl-L-alpha-aminoacyl-tRNA + H2O = an N-acyl-L-amino acid + a tRNA + H(+). Functionally, hydrolyzes ribosome-free peptidyl-tRNAs (with 1 or more amino acids incorporated), which drop off the ribosome during protein synthesis, or as a result of ribosome stalling. Catalyzes the release of premature peptidyl moieties from peptidyl-tRNA molecules trapped in stalled 50S ribosomal subunits, and thus maintains levels of free tRNAs and 50S ribosomes. The polypeptide is Peptidyl-tRNA hydrolase (Wolinella succinogenes (strain ATCC 29543 / DSM 1740 / CCUG 13145 / JCM 31913 / LMG 7466 / NCTC 11488 / FDC 602W) (Vibrio succinogenes)).